Here is a 469-residue protein sequence, read N- to C-terminus: Argininosuccinate lyase (469 aa).

This sequence belongs to the lyase 1 family. Argininosuccinate lyase subfamily.

Its subcellular location is the cytoplasm. The enzyme catalyses 2-(N(omega)-L-arginino)succinate = fumarate + L-arginine. It functions in the pathway amino-acid biosynthesis; L-arginine biosynthesis; L-arginine from L-ornithine and carbamoyl phosphate: step 3/3. The polypeptide is Argininosuccinate lyase (Mycolicibacterium smegmatis (strain ATCC 700084 / mc(2)155) (Mycobacterium smegmatis)).